Reading from the N-terminus, the 370-residue chain is MTNANVDATQLTTKPSQDGFYMPAEWAAQQAVWMIWPYRPDNWRSAGAYAQATFAKVADAIGGATPVYMGVPQAFLAEAQKVMPSHVTLVEIDSNDCWARDTGPTVVVNAEGECRGVDWGFNAWGGHNGGLYFPWDKDEQVAAQMLKQHGFARYSAPLILEGGSIHVDGEGTCMTTAECLLNANRNPDLTKEQIEALLRDYLNVKQFIWLEEGVYMDETDGHIDNMCCFARPGEVILHWTDDETDPQYPRSKAALDVLQNTVDAQGRKLKIHLLPQPGPLYCTEEESKGVTEGTGVPRTAGERLAGSYVNFLITNDRIVFPLLDPATDDIAAQKLQDIFPEHKIVGVPAREILLGGGNIHCITQQIPSGK.

Cys-361 functions as the Amidino-cysteine intermediate in the catalytic mechanism.

It belongs to the agmatine deiminase family.

The catalysed reaction is agmatine + H2O = N-carbamoylputrescine + NH4(+). This Shewanella sp. (strain MR-4) protein is Putative agmatine deiminase.